The following is a 636-amino-acid chain: Chaperone protein DnaK (636 aa).

Thr-198 carries the post-translational modification Phosphothreonine; by autocatalysis. Positions 602–636 (QAEGAQPGGEAAGEASAKDEKVVDADFEEVKDDKK) are disordered. Positions 626-636 (ADFEEVKDDKK) are enriched in acidic residues.

It belongs to the heat shock protein 70 family.

Functionally, acts as a chaperone. This chain is Chaperone protein DnaK, found in Geobacter sulfurreducens (strain ATCC 51573 / DSM 12127 / PCA).